Here is a 258-residue protein sequence, read N- to C-terminus: Malonyl-[acyl-carrier protein] O-methyltransferase (258 aa).

The protein belongs to the methyltransferase superfamily.

It catalyses the reaction malonyl-[ACP] + S-adenosyl-L-methionine = malonyl-[ACP] methyl ester + S-adenosyl-L-homocysteine. It functions in the pathway cofactor biosynthesis; biotin biosynthesis. Functionally, converts the free carboxyl group of a malonyl-thioester to its methyl ester by transfer of a methyl group from S-adenosyl-L-methionine (SAM). It allows to synthesize pimeloyl-ACP via the fatty acid synthetic pathway. The polypeptide is Malonyl-[acyl-carrier protein] O-methyltransferase (Haemophilus ducreyi (strain 35000HP / ATCC 700724)).